The chain runs to 379 residues: L-lactate dehydrogenase (379 aa).

The FMN hydroxy acid dehydrogenase domain occupies 1–379 (MIISASTDYR…LSRDSLVKIP (379 aa)). Substrate is bound at residue Y24. The FMN site is built by S106 and Q127. Y129 lines the substrate pocket. T155 serves as a coordination point for FMN. R164 is a substrate binding site. Residue K251 coordinates FMN. H275 serves as the catalytic Proton acceptor. R278 lines the substrate pocket. Residue 306 to 330 (DSGIRTGLDVVRMLALGADCTLLGR) coordinates FMN.

It belongs to the FMN-dependent alpha-hydroxy acid dehydrogenase family. FMN serves as cofactor.

The protein resides in the cell inner membrane. The enzyme catalyses (S)-lactate + A = pyruvate + AH2. In terms of biological role, catalyzes the conversion of L-lactate to pyruvate. Is coupled to the respiratory chain. The sequence is that of L-lactate dehydrogenase from Vibrio parahaemolyticus serotype O3:K6 (strain RIMD 2210633).